A 412-amino-acid polypeptide reads, in one-letter code: MNAEIIAVGTELLLGQIANTNAQFLSEKLASIGINVYYHTVVGDNNKRLQQAIEVAEERADMLIFTGGLGPTKDDLTKETIASSLAEELVYDEKALASISDYFKRTGREFTENNKKQALVLDGATVFANDHGMAPGMGLNKNGKVYILLPGPPKEMKPMYVSYVEPFLRNFTTGENIYSRVLRFFGIGESQLEVKVQDLIDGQTNPTIAPLANDGEVTLRLTAKHQNVHEAEKLIQHVEDLILERVGEFFYGYDQEFLHYKAIELLKKKGLTLACAESLTGGLFGNQVTENAGVSSVFKGGVICYHNDVKQHVLHVPEEVLSTDGAVSKECARYLAENVRELLKADIGISFTGVAGPDASEHKEPGTVFVGLAIKDEPTVVFPLNLSGSRQQIRERSAKYGFYHLYKKLEEI.

It belongs to the CinA family.

This Bacillus cereus (strain AH187) protein is Putative competence-damage inducible protein.